The primary structure comprises 388 residues: L-lactate dehydrogenase (388 aa).

An FMN hydroxy acid dehydrogenase domain is found at 1 to 380; sequence MIISAASDYR…SADALSRVTR (380 aa). Position 24 (Tyr24) interacts with substrate. FMN-binding residues include Ser106 and Gln127. Position 129 (Tyr129) interacts with substrate. Thr155 contributes to the FMN binding site. Substrate is bound at residue Arg164. Position 251 (Lys251) interacts with FMN. Catalysis depends on His275, which acts as the Proton acceptor. Arg278 is a substrate binding site. Residue 306–330 participates in FMN binding; the sequence is DSGIRSGLDVVRMLALGADAVLLGR.

It belongs to the FMN-dependent alpha-hydroxy acid dehydrogenase family. FMN is required as a cofactor.

Its subcellular location is the cell inner membrane. The catalysed reaction is (S)-lactate + A = pyruvate + AH2. Its function is as follows. Catalyzes the conversion of L-lactate to pyruvate. Is coupled to the respiratory chain. The protein is L-lactate dehydrogenase of Xanthomonas axonopodis pv. citri (strain 306).